The sequence spans 250 residues: UDP-2,3-diacylglucosamine hydrolase (250 aa).

Asp-8, His-10, Asp-41, Asn-79, and His-114 together coordinate Mn(2+). Asn-79 to Arg-80 serves as a coordination point for substrate. Substrate contacts are provided by Asp-122, Ser-160, Gln-167, and His-195. The Mn(2+) site is built by His-195 and His-197.

The protein belongs to the LpxH family. The cofactor is Mn(2+).

The protein localises to the cell inner membrane. It carries out the reaction UDP-2-N,3-O-bis[(3R)-3-hydroxytetradecanoyl]-alpha-D-glucosamine + H2O = 2-N,3-O-bis[(3R)-3-hydroxytetradecanoyl]-alpha-D-glucosaminyl 1-phosphate + UMP + 2 H(+). It functions in the pathway glycolipid biosynthesis; lipid IV(A) biosynthesis; lipid IV(A) from (3R)-3-hydroxytetradecanoyl-[acyl-carrier-protein] and UDP-N-acetyl-alpha-D-glucosamine: step 4/6. In terms of biological role, hydrolyzes the pyrophosphate bond of UDP-2,3-diacylglucosamine to yield 2,3-diacylglucosamine 1-phosphate (lipid X) and UMP by catalyzing the attack of water at the alpha-P atom. Involved in the biosynthesis of lipid A, a phosphorylated glycolipid that anchors the lipopolysaccharide to the outer membrane of the cell. This Nitrosococcus oceani (strain ATCC 19707 / BCRC 17464 / JCM 30415 / NCIMB 11848 / C-107) protein is UDP-2,3-diacylglucosamine hydrolase.